The following is a 158-amino-acid chain: Endoribonuclease YbeY (158 aa).

Residues His119, His123, and His129 each coordinate Zn(2+).

It belongs to the endoribonuclease YbeY family. Zn(2+) is required as a cofactor.

Its subcellular location is the cytoplasm. Its function is as follows. Single strand-specific metallo-endoribonuclease involved in late-stage 70S ribosome quality control and in maturation of the 3' terminus of the 16S rRNA. The polypeptide is Endoribonuclease YbeY (Shewanella sediminis (strain HAW-EB3)).